The primary structure comprises 185 residues: Large ribosomal subunit protein uL5 (185 aa).

It belongs to the universal ribosomal protein uL5 family. As to quaternary structure, part of the 50S ribosomal subunit; part of the 5S rRNA/L5/L18/L25 subcomplex. Contacts the 5S rRNA and the P site tRNA. Forms a bridge to the 30S subunit in the 70S ribosome.

This is one of the proteins that bind and probably mediate the attachment of the 5S RNA into the large ribosomal subunit, where it forms part of the central protuberance. In the 70S ribosome it contacts protein S13 of the 30S subunit (bridge B1b), connecting the 2 subunits; this bridge is implicated in subunit movement. Contacts the P site tRNA; the 5S rRNA and some of its associated proteins might help stabilize positioning of ribosome-bound tRNAs. The sequence is that of Large ribosomal subunit protein uL5 from Rhodopseudomonas palustris (strain BisB5).